Here is a 484-residue protein sequence, read N- to C-terminus: UDP-N-acetylmuramoyl-L-alanyl-D-glutamate--L-lysine ligase (484 aa).

Residue serine 43 participates in UDP-N-acetyl-alpha-D-muramoyl-L-alanyl-D-glutamate binding. Glycine 119–threonine 125 contacts ATP. Residues threonine 161–threonine 162, serine 188, and arginine 196 each bind UDP-N-acetyl-alpha-D-muramoyl-L-alanyl-D-glutamate. Lysine 230 carries the post-translational modification N6-carboxylysine. The short motif at aspartate 405 to asparagine 408 is the L-lysine recognition motif element.

The protein belongs to the MurCDEF family. MurE subfamily. Carboxylation is probably crucial for Mg(2+) binding and, consequently, for the gamma-phosphate positioning of ATP.

Its subcellular location is the cytoplasm. The catalysed reaction is UDP-N-acetyl-alpha-D-muramoyl-L-alanyl-D-glutamate + L-lysine + ATP = UDP-N-acetyl-alpha-D-muramoyl-L-alanyl-gamma-D-glutamyl-L-lysine + ADP + phosphate + H(+). The protein operates within cell wall biogenesis; peptidoglycan biosynthesis. Functionally, catalyzes the addition of L-lysine to the nucleotide precursor UDP-N-acetylmuramoyl-L-alanyl-D-glutamate (UMAG) in the biosynthesis of bacterial cell-wall peptidoglycan. This is UDP-N-acetylmuramoyl-L-alanyl-D-glutamate--L-lysine ligase from Streptococcus agalactiae serotype III (strain NEM316).